We begin with the raw amino-acid sequence, 914 residues long: Translation initiation factor IF-2 (914 aa).

Disordered stretches follow at residues 52 to 84 (GGGK…VKAP) and 98 to 326 (AGGN…GVRL). Over residues 57–68 (AEGAAKAPAKAA) the composition is skewed to low complexity. The segment covering 69–84 (AKGDAKTAAKGDVKAP) has biased composition (basic and acidic residues). The span at 98 to 138 (AGGNGEAAAPPAQPGGTATTPAAQATPEAPARPGPAAARPS) shows a compositional bias: low complexity. Pro residues-rich tracts occupy residues 139 to 169 (APAP…PAPK) and 193 to 207 (PRPV…PGAP). A compositionally biased stretch (gly residues) spans 236-296 (RPGGGRPGGP…GAAGAFGRPG (61 aa)). The span at 300–309 (RRGRKSKRQK) shows a compositional bias: basic residues. Positions 421–581 (TRPPVVTVMG…AVLLTADAAL (161 aa)) constitute a tr-type G domain. GTP-binding positions include 430–437 (GHVDHGKT), 469–473 (DTPGH), and 523–526 (NKID).

This sequence belongs to the TRAFAC class translation factor GTPase superfamily. Classic translation factor GTPase family. IF-2 subfamily.

The protein localises to the cytoplasm. One of the essential components for the initiation of protein synthesis. Protects formylmethionyl-tRNA from spontaneous hydrolysis and promotes its binding to the 30S ribosomal subunits. Also involved in the hydrolysis of GTP during the formation of the 70S ribosomal complex. In Mycobacterium avium (strain 104), this protein is Translation initiation factor IF-2.